The chain runs to 369 residues: 3-dehydroquinate synthase (369 aa).

NAD(+) contacts are provided by residues 72-77 (SGEKEK), 130-131 (TT), Lys-142, and Lys-151. Residues Glu-184, His-247, and His-264 each contribute to the Zn(2+) site.

It belongs to the sugar phosphate cyclases superfamily. Dehydroquinate synthase family. Co(2+) is required as a cofactor. The cofactor is Zn(2+). Requires NAD(+) as cofactor.

The protein resides in the cytoplasm. The enzyme catalyses 7-phospho-2-dehydro-3-deoxy-D-arabino-heptonate = 3-dehydroquinate + phosphate. Its pathway is metabolic intermediate biosynthesis; chorismate biosynthesis; chorismate from D-erythrose 4-phosphate and phosphoenolpyruvate: step 2/7. Functionally, catalyzes the conversion of 3-deoxy-D-arabino-heptulosonate 7-phosphate (DAHP) to dehydroquinate (DHQ). This Bacillus cytotoxicus (strain DSM 22905 / CIP 110041 / 391-98 / NVH 391-98) protein is 3-dehydroquinate synthase.